Reading from the N-terminus, the 292-residue chain is Polyketide transferase af380 (292 aa).

The segment at 46 to 267 is abhydrolase domain; the sequence is DVAVWFQQQG…FDLVAGRGHM (222 aa).

It belongs to the polyketide transferase af380 family.

It carries out the reaction fumagillol + dodecapentaneoyl-[polyketide synthase] = prefumagillin + holo-[polyketide synthase]. The protein operates within secondary metabolite biosynthesis; terpenoid biosynthesis. In terms of biological role, polyketide transferase; part of the gene cluster that mediates the biosynthesis of fumagillin, a meroterpenoid that has numerous biological activities including irreversible inhibition of human type 2 methionine aminopeptidase (METAP2). Within the pathway, the polyketide transferase af380 catalyzes the transfer of a dodecapentaenoyl group synthesized by the polyketide synthase af370 onto 5R-hydroxy-seco-sesquiterpene to produce prefumagillin. The pathway begins with the conversion of farnesyl pyrophosphate (FPP) to beta-trans-bergamotene by the membrane-bound beta-trans-bergamotene synthase af520. The multifunctional cytochrome P450 monooxygenase af510 then converts beta-trans-bergamotene into 5-keto-demethoxyfumagillol via several oxydation steps. 5-keto-demethoxyfumagillol is then subjected to successive C-6 hydroxylation and O-methylation by the dioxygenase af480 and O-methyltransferase af390-400, respectively, to yield 5-keto-fumagillol, which is then stereoselectively reduced by the keto-reductase af490 to 5R-hydroxy-seco-sesquiterpene. The next step is the polyketide transferase af380-catalyzed transfer of a dodecapentaenoyl group synthesized by the polyketide synthase af370 onto 5R-hydroxy-seco-sesquiterpene which leads to the production of prefumagillin. Finally, oxidative cleavage by the monooxygenase af470 converts prefumagillin to fumagillin. This Aspergillus fumigatus (strain ATCC MYA-4609 / CBS 101355 / FGSC A1100 / Af293) (Neosartorya fumigata) protein is Polyketide transferase af380.